The sequence spans 153 residues: Cyanate hydratase (153 aa).

Active-site residues include arginine 88, glutamate 91, and serine 114.

Belongs to the cyanase family.

The catalysed reaction is cyanate + hydrogencarbonate + 3 H(+) = NH4(+) + 2 CO2. Its function is as follows. Catalyzes the reaction of cyanate with bicarbonate to produce ammonia and carbon dioxide. This Mycolicibacterium vanbaalenii (strain DSM 7251 / JCM 13017 / BCRC 16820 / KCTC 9966 / NRRL B-24157 / PYR-1) (Mycobacterium vanbaalenii) protein is Cyanate hydratase.